We begin with the raw amino-acid sequence, 429 residues long: 3-phosphoshikimate 1-carboxyvinyltransferase (429 aa).

Lys21, Ser22, and Arg26 together coordinate 3-phosphoshikimate. Lys21 serves as a coordination point for phosphoenolpyruvate. Phosphoenolpyruvate-binding residues include Gly94 and Arg122. Residues Ser167, Gln169, Asp315, and Lys342 each coordinate 3-phosphoshikimate. Gln169 contributes to the phosphoenolpyruvate binding site. The active-site Proton acceptor is the Asp315. 2 residues coordinate phosphoenolpyruvate: Arg346 and Arg388.

Belongs to the EPSP synthase family. Monomer.

The protein localises to the cytoplasm. The catalysed reaction is 3-phosphoshikimate + phosphoenolpyruvate = 5-O-(1-carboxyvinyl)-3-phosphoshikimate + phosphate. Its pathway is metabolic intermediate biosynthesis; chorismate biosynthesis; chorismate from D-erythrose 4-phosphate and phosphoenolpyruvate: step 6/7. Functionally, catalyzes the transfer of the enolpyruvyl moiety of phosphoenolpyruvate (PEP) to the 5-hydroxyl of shikimate-3-phosphate (S3P) to produce enolpyruvyl shikimate-3-phosphate and inorganic phosphate. This chain is 3-phosphoshikimate 1-carboxyvinyltransferase, found in Desulforamulus reducens (strain ATCC BAA-1160 / DSM 100696 / MI-1) (Desulfotomaculum reducens).